A 251-amino-acid chain; its full sequence is NADH-quinone oxidoreductase subunit C (251 aa).

The tract at residues methionine 1–glutamate 34 is disordered.

The protein belongs to the complex I 30 kDa subunit family. In terms of assembly, NDH-1 is composed of 14 different subunits. Subunits NuoB, C, D, E, F, and G constitute the peripheral sector of the complex.

It localises to the cell membrane. The catalysed reaction is a quinone + NADH + 5 H(+)(in) = a quinol + NAD(+) + 4 H(+)(out). In terms of biological role, NDH-1 shuttles electrons from NADH, via FMN and iron-sulfur (Fe-S) centers, to quinones in the respiratory chain. The immediate electron acceptor for the enzyme in this species is believed to be a menaquinone. Couples the redox reaction to proton translocation (for every two electrons transferred, four hydrogen ions are translocated across the cytoplasmic membrane), and thus conserves the redox energy in a proton gradient. In Streptomyces coelicolor (strain ATCC BAA-471 / A3(2) / M145), this protein is NADH-quinone oxidoreductase subunit C.